Reading from the N-terminus, the 230-residue chain is Transmembrane ascorbate ferrireductase 2 (230 aa).

2 consecutive transmembrane segments (helical) span residues 5-25 and 50-70; these read VLGGFPIFMVVRVLGFIIAAL and VHPVMMVIGLILFNGEAMLAY. The Cytochrome b561 domain maps to 14–218; that stretch reads VVRVLGFIIA…LGGFVILGVV (205 aa). Residue His-51 participates in heme b binding. The L-ascorbate site is built by Lys-77 and Lys-81. A helical membrane pass occupies residues 82-102; the sequence is LVHLTLQLTAFILSLIGVWAA. Position 84 (His-84) interacts with heme b. Residues Phe-105, His-106, and Tyr-115 each contribute to the monodehydro-L-ascorbate radical site. His-118 contacts heme b. A helical transmembrane segment spans residues 120–140; sequence WLGLACLFLFAFQWAAGFVTY. Positions 140, 150, and 151 each coordinate L-ascorbate. His-157 serves as a coordination point for heme b. The helical transmembrane segment at 157–177 threads the bilayer; the sequence is HVFLGISIYALALVTATTGIL. Residues Phe-182 and Asn-186 each contribute to the monodehydro-L-ascorbate radical site. Residues 198–218 traverse the membrane as a helical segment; it reads LVNTMGVLILILGGFVILGVV.

As to quaternary structure, homodimer. It depends on heme b as a cofactor. As to expression, expressed in roots, seedlings, leaves and flowers. Expressed in the L1 layer of the shoot apex, in the epidermis of leaf primordia and young leaves and in vascular bundles. In the differentiation zone of the root, detected in the pericycle and in the epidermis, but not in the cortex. Strongly expressed in the cortical region of the root tip, in the meristematic tissue and in the epidermal cell layer of lateral roots, but not in the root caps. Highly expressed in unfertilized ovules. In mature embryos, expressed in the epidermis, cotyledon tips and root tips.

It localises to the membrane. The catalysed reaction is Fe(3+)(out) + L-ascorbate(in) = monodehydro-L-ascorbate radical(in) + Fe(2+)(out) + H(+). In terms of biological role, two-heme-containing cytochrome. Catalyzes ascorbate-dependent transmembrane ferric-chelate reduction. This is Transmembrane ascorbate ferrireductase 2 (CYB561B) from Arabidopsis thaliana (Mouse-ear cress).